Here is a 671-residue protein sequence, read N- to C-terminus: DNA ligase (671 aa).

Residues 32-36, 81-82, and Glu-113 contribute to the NAD(+) site; these read DAEYD and SL. Lys-115 acts as the N6-AMP-lysine intermediate in catalysis. NAD(+)-binding residues include Arg-136, Glu-173, Lys-290, and Lys-314. Zn(2+) is bound by residues Cys-408, Cys-411, Cys-426, and Cys-432. The BRCT domain occupies 593–671; it reads EIDSPFAGKT…EAEMLRLLGS (79 aa).

This sequence belongs to the NAD-dependent DNA ligase family. LigA subfamily. Mg(2+) serves as cofactor. The cofactor is Mn(2+).

It carries out the reaction NAD(+) + (deoxyribonucleotide)n-3'-hydroxyl + 5'-phospho-(deoxyribonucleotide)m = (deoxyribonucleotide)n+m + AMP + beta-nicotinamide D-nucleotide.. Its function is as follows. DNA ligase that catalyzes the formation of phosphodiester linkages between 5'-phosphoryl and 3'-hydroxyl groups in double-stranded DNA using NAD as a coenzyme and as the energy source for the reaction. It is essential for DNA replication and repair of damaged DNA. This chain is DNA ligase, found in Escherichia coli (strain SE11).